A 683-amino-acid chain; its full sequence is Protein zntD (683 aa).

3 consecutive transmembrane segments (helical) span residues 12–32 (IIST…PYWM), 42–62 (LSWS…LHLF), and 79–99 (PFAA…ELII). Basic residues predominate over residues 120 to 129 (VHLSHGHSHH). Disordered stretches follow at residues 120 to 180 (VHLS…TTTT), 299 to 325 (GFSN…NNNN), 364 to 390 (CSND…TPNT), and 451 to 489 (IGNS…NNNN). A compositionally biased stretch (gly residues) spans 137 to 149 (GNPGSGVGIGMGS). Composition is skewed to low complexity over residues 160-180 (TTSP…TTTT) and 302-325 (NNNN…NNNN). A compositionally biased stretch (low complexity) spans 451–465 (IGNSGNIGSNNNNNN). Positions 466-475 (NGGGGGGGGN) are enriched in gly residues. The span at 476-489 (SNIDYNDNEENNNN) shows a compositional bias: low complexity. The next 5 helical transmembrane spans lie at 534-554 (ILLP…EGLA), 564-584 (VFDI…ALGI), 600-620 (FLLV…GMVI), 631-651 (PPIL…VEII), and 662-682 (ILIK…VAIW).

The protein belongs to the ZIP transporter (TC 2.A.5) family.

Its subcellular location is the membrane. Its function is as follows. May transport divalent cations. May participate, with dstA, in the regulation of the differentiation of stalk cells during development. The chain is Protein zntD (zntD) from Dictyostelium discoideum (Social amoeba).